A 376-amino-acid polypeptide reads, in one-letter code: Protein RecA (376 aa).

66 to 73 (GPESSGKT) is a binding site for ATP. Residues 329–376 (VGVKPEDLTAEPGADAAGAAADAEAPAKSVPAPAAKSAKGSKAAAAKS) form a disordered region. The span at 338 to 376 (AEPGADAAGAAADAEAPAKSVPAPAAKSAKGSKAAAAKS) shows a compositional bias: low complexity.

Belongs to the RecA family.

It is found in the cytoplasm. In terms of biological role, can catalyze the hydrolysis of ATP in the presence of single-stranded DNA, the ATP-dependent uptake of single-stranded DNA by duplex DNA, and the ATP-dependent hybridization of homologous single-stranded DNAs. It interacts with LexA causing its activation and leading to its autocatalytic cleavage. This is Protein RecA from Streptomyces rimosus.